A 638-amino-acid chain; its full sequence is Golgi integral membrane protein 4 (638 aa).

The Cytoplasmic segment spans residues 1-12 (MGNGMCSRRQKR). Residues 13 to 33 (IFQALACLAVAIGFVYGAMLN) form a helical; Signal-anchor for type II membrane protein membrane-spanning segment. The Lumenal portion of the chain corresponds to 34 to 638 (YHLQNDLKKA…GVKNKRRAEM (605 aa)). Golgi targeting regions lie at residues 38-107 (NDLK…RQDS) and 176-220 (YNLR…SSLR). The stretch at 66–216 (EHRSRLEKSL…VQLKKALNKM (151 aa)) forms a coiled coil. The tract at residues 80 to 175 (LEHKKAKEDF…QEHSKLKESI (96 aa)) is endosome targeting. 3 disordered regions span residues 217-245 (SSLR…EHAT), 280-415 (RVKT…QQDL), and 455-638 (KQAE…RAEM). Basic and acidic residues-rich tracts occupy residues 301-316 (ATEH…KKEL) and 323-332 (QVGKPERLVE). Residues 348–361 (EDDALEGNNEEQKE) show a composition bias toward acidic residues. 3 stretches are compositionally biased toward basic and acidic residues: residues 402-414 (QMEE…EQQD), 455-467 (KQAE…HDIV), and 510-521 (AESREGQEKAAA). Acidic residues-rich tracts occupy residues 534–553 (GEDE…PDEN) and 577–593 (QQED…EEEE). Over residues 594–615 (RQIGAEREPDAQQEENKERNEE) the composition is skewed to basic and acidic residues. The span at 616-626 (NYEEEEEEEDG) shows a compositional bias: acidic residues.

Belongs to the GOLIM4 family.

The protein localises to the golgi apparatus. It is found in the golgi stack membrane. It localises to the endosome membrane. Functionally, may play a role in endosome to Golgi protein trafficking. The polypeptide is Golgi integral membrane protein 4 (golim4) (Xenopus tropicalis (Western clawed frog)).